The sequence spans 69 residues: uncharacterized protein (69 aa).

2 consecutive transmembrane segments (helical) span residues 15–35 (LIIG…ICYV) and 36–56 (LYII…IPKT).

The protein localises to the cell membrane. This is an uncharacterized protein from Methanocaldococcus jannaschii (strain ATCC 43067 / DSM 2661 / JAL-1 / JCM 10045 / NBRC 100440) (Methanococcus jannaschii).